A 1123-amino-acid chain; its full sequence is Adenylyl cyclase X E (1123 aa).

Over 1–47 (MPRSLGNCQLNYSKERMWEPGYLKAKCAELRLESEFRLYRIRLWKSY) the chain is Cytoplasmic. Residues 48-68 (LLTFFMLHIFVTSVHCALLLA) form a helical membrane-spanning segment. Residues 69–73 (TIERR) lie on the Extracellular side of the membrane. The chain crosses the membrane as a helical span at residues 74 to 94 (SIIYFDVALSIGCALVLILVL). Residues 95–106 (SVNFCDEFIAKH) are Cytoplasmic-facing. The helical transmembrane segment at 107–127 (TWYMYASSIFASLTLVFADLT) threads the bilayer. Residues 128–137 (ESIYHTYAHS) are Extracellular-facing. A helical transmembrane segment spans residues 138–158 (WILGTFYDTYIIYMIYMFLPI). At 159–163 (HFISG) the chain is on the cytoplasmic side. The chain crosses the membrane as a helical span at residues 164–184 (AVLLALLVSGLYILYFVIFIA). Residues 185–196 (QGFAQFASALFS) are Extracellular-facing. Residues 197–217 (VGGMSVDIVHYLCLNLVGIFY) traverse the membrane as a helical segment. The Cytoplasmic segment spans residues 218 to 581 (RVMNDTVVRS…YLKQTDYMYK (364 aa)). Residues 346 to 348 (LGD) and arginine 392 each bind ATP. Residue aspartate 348 coordinates Mg(2+). Residues 582-602 (YSIILSASVGCSLVYIELMDT) form a helical membrane-spanning segment. The Extracellular segment spans residues 603–608 (QMICSS). A helical transmembrane segment spans residues 609–629 (CFVLPASVATIQCILALIAWY). Residues 630–667 (KKYCWTRYGRNNVPHHYNGFSCFIFRIHDKILNSLPIR) are Cytoplasmic-facing. The chain crosses the membrane as a helical span at residues 668 to 688 (ICIYLFLMISSFFVMCLIVMS). Residues 689 to 719 (CQREEFEMAYIEERLFHYEQEAHICFHPWVT) lie on the Extracellular side of the membrane. The chain crosses the membrane as a helical span at residues 720-740 (TNMLSLMICLTFTFAHIPIMV). The Cytoplasmic segment spans residues 741–743 (KTA). The chain crosses the membrane as a helical span at residues 744–764 (VAILETLAYLLLIFFQFDFVF). Residues 765-772 (HHSVTTNP) are Extracellular-facing. A helical transmembrane segment spans residues 773-793 (YFKSEYAHALLICITFLIMFV). Over 794–1123 (KERQIEFTNK…STSRHTLQSL (330 aa)) the chain is Cytoplasmic. Residues lysine 903, 1014–1016 (DIW), 1021–1025 (NMASR), and lysine 1061 each bind ATP.

This sequence belongs to the adenylyl cyclase class-4/guanylyl cyclase family. Expressed in labella.

The protein localises to the membrane. The catalysed reaction is ATP = 3',5'-cyclic AMP + diphosphate. In terms of biological role, catalyzes the formation of the signaling molecule cAMP in response to G-protein signaling. In Drosophila melanogaster (Fruit fly), this protein is Adenylyl cyclase X E.